The sequence spans 493 residues: Glutamyl-tRNA(Gln) amidotransferase subunit A (493 aa).

Catalysis depends on charge relay system residues Lys79 and Ser159. Ser183 acts as the Acyl-ester intermediate in catalysis.

It belongs to the amidase family. GatA subfamily. Heterotrimer of A, B and C subunits.

The catalysed reaction is L-glutamyl-tRNA(Gln) + L-glutamine + ATP + H2O = L-glutaminyl-tRNA(Gln) + L-glutamate + ADP + phosphate + H(+). Functionally, allows the formation of correctly charged Gln-tRNA(Gln) through the transamidation of misacylated Glu-tRNA(Gln) in organisms which lack glutaminyl-tRNA synthetase. The reaction takes place in the presence of glutamine and ATP through an activated gamma-phospho-Glu-tRNA(Gln). In Rhizobium johnstonii (strain DSM 114642 / LMG 32736 / 3841) (Rhizobium leguminosarum bv. viciae), this protein is Glutamyl-tRNA(Gln) amidotransferase subunit A.